The following is a 292-amino-acid chain: Elongation factor Ts (292 aa).

Positions 79-82 (TDFV) are involved in Mg(2+) ion dislocation from EF-Tu.

The protein belongs to the EF-Ts family.

The protein resides in the cytoplasm. Functionally, associates with the EF-Tu.GDP complex and induces the exchange of GDP to GTP. It remains bound to the aminoacyl-tRNA.EF-Tu.GTP complex up to the GTP hydrolysis stage on the ribosome. The polypeptide is Elongation factor Ts (Staphylococcus haemolyticus (strain JCSC1435)).